Consider the following 143-residue polypeptide: MAKKIDGYIKLQVPAGKANPSPPIGPALGQKGVNIMAFCKEFNAATASMEPGLPIPTEITVYADKSFTFIMKSPPAAFLLRKAAGIAKGSGVPNTTKVGKVTRAQLEEIVQTKNADLTAADLDAAVRTIAGTARSMGIDVEGV.

The protein belongs to the universal ribosomal protein uL11 family. As to quaternary structure, part of the ribosomal stalk of the 50S ribosomal subunit. Interacts with L10 and the large rRNA to form the base of the stalk. L10 forms an elongated spine to which L12 dimers bind in a sequential fashion forming a multimeric L10(L12)X complex. In terms of processing, one or more lysine residues are methylated.

Its function is as follows. Forms part of the ribosomal stalk which helps the ribosome interact with GTP-bound translation factors. The sequence is that of Large ribosomal subunit protein uL11 from Psychrobacter sp. (strain PRwf-1).